Here is a 323-residue protein sequence, read N- to C-terminus: Phosphomevalonate kinase (323 aa).

This sequence belongs to the GHMP kinase family. As to quaternary structure, homodimer. It depends on Mg(2+) as a cofactor.

The enzyme catalyses (R)-5-phosphomevalonate + ATP = (R)-5-diphosphomevalonate + ADP. Its pathway is isoprenoid biosynthesis; isopentenyl diphosphate biosynthesis via mevalonate pathway; isopentenyl diphosphate from (R)-mevalonate: step 2/3. Functionally, catalyzes the phosphorylation of (R)-mevalonate 5-phosphate (MVAP) to (R)-mevalonate 5-diphosphate (MVAPP). Functions in the mevalonate (MVA) pathway leading to isopentenyl diphosphate (IPP), a key precursor for the biosynthesis of isoprenoid compounds such as archaeal membrane lipids. In Saccharolobus solfataricus (strain ATCC 35092 / DSM 1617 / JCM 11322 / P2) (Sulfolobus solfataricus), this protein is Phosphomevalonate kinase.